The sequence spans 341 residues: L-threonine 3-dehydrogenase (341 aa).

Cysteine 38 is a Zn(2+) binding site. Catalysis depends on charge relay system residues threonine 40 and histidine 43. Zn(2+) contacts are provided by histidine 63, glutamate 64, cysteine 93, cysteine 96, cysteine 99, and cysteine 107. NAD(+) contacts are provided by residues isoleucine 175, aspartate 195, arginine 200, 262–264 (LGI), and 286–287 (IY).

The protein belongs to the zinc-containing alcohol dehydrogenase family. Homotetramer. It depends on Zn(2+) as a cofactor.

It is found in the cytoplasm. It catalyses the reaction L-threonine + NAD(+) = (2S)-2-amino-3-oxobutanoate + NADH + H(+). The protein operates within amino-acid degradation; L-threonine degradation via oxydo-reductase pathway; glycine from L-threonine: step 1/2. Functionally, catalyzes the NAD(+)-dependent oxidation of L-threonine to 2-amino-3-ketobutyrate. The sequence is that of L-threonine 3-dehydrogenase from Shewanella putrefaciens (strain CN-32 / ATCC BAA-453).